The primary structure comprises 239 residues: Tetraspanin-9 (239 aa).

The Cytoplasmic portion of the chain corresponds to 1-13 (MARGCLCCLKYTM). The chain crosses the membrane as a helical span at residues 14–34 (FLFNLIFWLCGCGLLGVGIWL). The Extracellular portion of the chain corresponds to 35–55 (SVSQGNFATFSPSFPSLSAAN). A helical transmembrane segment spans residues 56-76 (LVIAIGTIVMVTGFLGCLGAI). Over 77 to 85 (KENKCLLLS) the chain is Cytoplasmic. A helical membrane pass occupies residues 86–106 (FFIVLLIILLAELILIILFFV). The Extracellular portion of the chain corresponds to 107 to 203 (YMDKVNENAK…VKLWFDDNKH (97 aa)). A glycan (N-linked (GlcNAc...) asparagine) is linked at Asn-180. A helical transmembrane segment spans residues 204-224 (VLGTVGMCILIMQILGMAFSM). The Cytoplasmic portion of the chain corresponds to 225–239 (TLFQHIHRTGKKYDA).

The protein belongs to the tetraspanin (TM4SF) family. Found in a complex with GP6. Glycosylated. As to expression, strongly expressed in megakaryocytes, platelets and lung. Weakly expressed in bone marrow, brain and kidney (at protein level).

It is found in the membrane. The sequence is that of Tetraspanin-9 (Tspan9) from Mus musculus (Mouse).